A 165-amino-acid chain; its full sequence is uncharacterized protein (165 aa).

The RCK C-terminal domain occupies L76–T161.

This is an uncharacterized protein from Bacillus subtilis (strain 168).